Reading from the N-terminus, the 382-residue chain is Chorismate synthase (382 aa).

Residues arginine 39 and arginine 45 each coordinate NADP(+). A disordered region spans residues 89-113; sequence SPEPGGEPRKKALTDARPGHADLTG. Positions 94–108 are enriched in basic and acidic residues; sequence GEPRKKALTDARPGH. Residues 128–130, 246–247, alanine 290, 305–309, and arginine 331 contribute to the FMN site; these read RAS, QA, and KPIAT.

The protein belongs to the chorismate synthase family. As to quaternary structure, homotetramer. FMNH2 is required as a cofactor.

It carries out the reaction 5-O-(1-carboxyvinyl)-3-phosphoshikimate = chorismate + phosphate. Its pathway is metabolic intermediate biosynthesis; chorismate biosynthesis; chorismate from D-erythrose 4-phosphate and phosphoenolpyruvate: step 7/7. In terms of biological role, catalyzes the anti-1,4-elimination of the C-3 phosphate and the C-6 proR hydrogen from 5-enolpyruvylshikimate-3-phosphate (EPSP) to yield chorismate, which is the branch point compound that serves as the starting substrate for the three terminal pathways of aromatic amino acid biosynthesis. This reaction introduces a second double bond into the aromatic ring system. In Deinococcus radiodurans (strain ATCC 13939 / DSM 20539 / JCM 16871 / CCUG 27074 / LMG 4051 / NBRC 15346 / NCIMB 9279 / VKM B-1422 / R1), this protein is Chorismate synthase.